The chain runs to 66 residues: Toxin BomPI (66 aa).

An LCN-type CS-alpha/beta domain is found at 2–64 (RDAYIAQPEN…VPIRIEGKCH (63 aa)). 4 disulfides stabilise this stretch: Cys-12-Cys-63, Cys-16-Cys-36, Cys-22-Cys-46, and Cys-26-Cys-48.

This sequence belongs to the long (4 C-C) scorpion toxin superfamily. Sodium channel inhibitor family. Alpha subfamily. In terms of tissue distribution, expressed by the venom gland.

The protein localises to the secreted. Functionally, alpha toxins bind voltage-independently at site-3 of sodium channels (Nav) and inhibit the inactivation of the activated channels, thereby blocking neuronal transmission. The polypeptide is Toxin BomPI (Buthus occitanus mardochei (Moroccan scorpion)).